The chain runs to 475 residues: Ribosomal RNA small subunit methyltransferase F (475 aa).

S-adenosyl-L-methionine-binding positions include 125–131 (AAAPGSK), Glu149, Asp176, and Asp194. The active-site Nucleophile is Cys247.

It belongs to the class I-like SAM-binding methyltransferase superfamily. RsmB/NOP family.

It localises to the cytoplasm. It carries out the reaction cytidine(1407) in 16S rRNA + S-adenosyl-L-methionine = 5-methylcytidine(1407) in 16S rRNA + S-adenosyl-L-homocysteine + H(+). Its function is as follows. Specifically methylates the cytosine at position 1407 (m5C1407) of 16S rRNA. This Aeromonas hydrophila subsp. hydrophila (strain ATCC 7966 / DSM 30187 / BCRC 13018 / CCUG 14551 / JCM 1027 / KCTC 2358 / NCIMB 9240 / NCTC 8049) protein is Ribosomal RNA small subunit methyltransferase F.